The following is a 490-amino-acid chain: Cobyric acid synthase (490 aa).

The GATase cobBQ-type domain maps to 252 to 439 (RLKVVVPVLP…LHGLFESTAA (188 aa)). The Nucleophile role is filled by Cys-333. His-431 is a catalytic residue.

This sequence belongs to the CobB/CobQ family. CobQ subfamily.

Its pathway is cofactor biosynthesis; adenosylcobalamin biosynthesis. Functionally, catalyzes amidations at positions B, D, E, and G on adenosylcobyrinic A,C-diamide. NH(2) groups are provided by glutamine, and one molecule of ATP is hydrogenolyzed for each amidation. The chain is Cobyric acid synthase from Pseudomonas aeruginosa (strain ATCC 15692 / DSM 22644 / CIP 104116 / JCM 14847 / LMG 12228 / 1C / PRS 101 / PAO1).